The chain runs to 212 residues: Large ribosomal subunit protein uL3 (212 aa).

The interval 136 to 155 is disordered; the sequence is THGNSLSHRSNGSIGQNQTP. At Gln-153 the chain carries N5-methylglutamine.

This sequence belongs to the universal ribosomal protein uL3 family. Part of the 50S ribosomal subunit. Forms a cluster with proteins L14 and L19. Methylated by PrmB.

In terms of biological role, one of the primary rRNA binding proteins, it binds directly near the 3'-end of the 23S rRNA, where it nucleates assembly of the 50S subunit. The sequence is that of Large ribosomal subunit protein uL3 from Shewanella baltica (strain OS223).